A 478-amino-acid chain; its full sequence is UDP-N-acetylmuramate--L-alanine ligase (478 aa).

ATP is bound at residue 120–126 (GSHGKTT).

The protein belongs to the MurCDEF family.

It localises to the cytoplasm. The enzyme catalyses UDP-N-acetyl-alpha-D-muramate + L-alanine + ATP = UDP-N-acetyl-alpha-D-muramoyl-L-alanine + ADP + phosphate + H(+). The protein operates within cell wall biogenesis; peptidoglycan biosynthesis. Functionally, cell wall formation. This Rickettsia felis (strain ATCC VR-1525 / URRWXCal2) (Rickettsia azadi) protein is UDP-N-acetylmuramate--L-alanine ligase.